The sequence spans 134 residues: NADH-quinone oxidoreductase subunit A 1 (134 aa).

A run of 3 helical transmembrane segments spans residues 10-30 (LIPLAIYTLFAVGLIGILLLA), 65-85 (FYLIAIFFIVFDVEGAFILAW), and 94-114 (IPGLVHITLFITVLLLGLVWL).

Belongs to the complex I subunit 3 family. In terms of assembly, NDH-1 is composed of 14 different subunits. Subunits NuoA, H, J, K, L, M, N constitute the membrane sector of the complex.

The protein resides in the cell inner membrane. It carries out the reaction a quinone + NADH + 5 H(+)(in) = a quinol + NAD(+) + 4 H(+)(out). NDH-1 shuttles electrons from NADH, via FMN and iron-sulfur (Fe-S) centers, to quinones in the respiratory chain. The immediate electron acceptor for the enzyme in this species is believed to be ubiquinone. Couples the redox reaction to proton translocation (for every two electrons transferred, four hydrogen ions are translocated across the cytoplasmic membrane), and thus conserves the redox energy in a proton gradient. The chain is NADH-quinone oxidoreductase subunit A 1 from Citrifermentans bemidjiense (strain ATCC BAA-1014 / DSM 16622 / JCM 12645 / Bem) (Geobacter bemidjiensis).